The following is a 141-amino-acid chain: Protein KRTCAP2 homolog (141 aa).

4 helical membrane passes run 11 to 31, 42 to 62, 74 to 94, and 97 to 117; these read VVSS…LRFC, VLLG…CVSN, AKLL…AGLV, and VCAT…NRIS.

Belongs to the KRTCAP2 family. Component of the oligosaccharyltransferase (OST) complex.

The protein localises to the membrane. Its function is as follows. Subunit of the oligosaccharyl transferase (OST) complex that catalyzes the initial transfer of a defined glycan (Glc(3)Man(9)GlcNAc(2) in eukaryotes) from the lipid carrier dolichol-pyrophosphate to an asparagine residue within an Asn-X-Ser/Thr consensus motif in nascent polypeptide chains, the first step in protein N-glycosylation. N-glycosylation occurs cotranslationally and the complex associates with the Sec61 complex at the channel-forming translocon complex that mediates protein translocation across the endoplasmic reticulum (ER). All subunits are required for a maximal enzyme activity. The polypeptide is Protein KRTCAP2 homolog (Drosophila melanogaster (Fruit fly)).